Consider the following 325-residue polypeptide: Delta(1)-pyrroline-2-carboxylate reductase (325 aa).

Belongs to the ornithine cyclodeaminase/mu-crystallin family.

The catalysed reaction is L-proline + NAD(+) = 1-pyrroline-2-carboxylate + NADH + H(+). It carries out the reaction L-proline + NADP(+) = 1-pyrroline-2-carboxylate + NADPH + H(+). Functionally, catalyzes the reduction of Delta(1)-pyrroline-2-carboxylate (Pyr2C) to L-proline, using preferentially NADPH over NADH as the electron donor. Is likely involved in a degradation pathway that converts trans-3-hydroxy-L-proline (t3LHyp) to L-proline. The protein is Delta(1)-pyrroline-2-carboxylate reductase of Bacillus thuringiensis subsp. konkukian (strain 97-27).